A 201-amino-acid chain; its full sequence is dITP/XTP pyrophosphatase (201 aa).

9–14 (SNNAGK) serves as a coordination point for substrate. Residues E41 and D70 each coordinate Mg(2+). Residue D70 is the Proton acceptor of the active site. Residues S71, 155–158 (FGYD), K178, and 183–184 (HR) each bind substrate.

Belongs to the HAM1 NTPase family. Homodimer. Mg(2+) serves as cofactor.

The enzyme catalyses XTP + H2O = XMP + diphosphate + H(+). It carries out the reaction dITP + H2O = dIMP + diphosphate + H(+). The catalysed reaction is ITP + H2O = IMP + diphosphate + H(+). Functionally, pyrophosphatase that catalyzes the hydrolysis of nucleoside triphosphates to their monophosphate derivatives, with a high preference for the non-canonical purine nucleotides XTP (xanthosine triphosphate), dITP (deoxyinosine triphosphate) and ITP. Seems to function as a house-cleaning enzyme that removes non-canonical purine nucleotides from the nucleotide pool, thus preventing their incorporation into DNA/RNA and avoiding chromosomal lesions. The sequence is that of dITP/XTP pyrophosphatase from Methylococcus capsulatus (strain ATCC 33009 / NCIMB 11132 / Bath).